The chain runs to 244 residues: Adenosylcobinamide-GDP ribazoletransferase (244 aa).

5 helical membrane-spanning segments follow: residues 31–51 (LLFYPVVGLLFGLLLWLASHL), 55–75 (APAPLHAALLLALWVLLSGAL), 109–129 (IAVVVLVLVLLLKFCALWVLV), 134–154 (GGWLVLAPVVGRAAMLGLFMG), and 188–208 (VVLGGSPGLWMLLLSLGVFLW).

The protein belongs to the CobS family. It depends on Mg(2+) as a cofactor.

The protein resides in the cell inner membrane. It catalyses the reaction alpha-ribazole + adenosylcob(III)inamide-GDP = adenosylcob(III)alamin + GMP + H(+). It carries out the reaction alpha-ribazole 5'-phosphate + adenosylcob(III)inamide-GDP = adenosylcob(III)alamin 5'-phosphate + GMP + H(+). It participates in cofactor biosynthesis; adenosylcobalamin biosynthesis; adenosylcobalamin from cob(II)yrinate a,c-diamide: step 7/7. Joins adenosylcobinamide-GDP and alpha-ribazole to generate adenosylcobalamin (Ado-cobalamin). Also synthesizes adenosylcobalamin 5'-phosphate from adenosylcobinamide-GDP and alpha-ribazole 5'-phosphate. The chain is Adenosylcobinamide-GDP ribazoletransferase from Pseudomonas entomophila (strain L48).